The chain runs to 56 residues: Calsequestrin-1 (56 aa).

Phosphotyrosine is present on Y9. Position 47 is a phosphoserine (S47).

Belongs to the calsequestrin family. As to quaternary structure, monomer; increases in response to a depletion of intracellular calcium. Homodimer. Homotetramer and homopolymer. Can form linear homooligomers. Ca(2+) ions promote oligomerization. Interacts (via C-terminal end and preferentially with the monomeric form) with STIM1; this interaction increases in response to a depletion of intracellular calcium, decreases both STIM1 aggregation and clustering, interaction of STIM1 with ORAI1 and store-operated Ca(2+) entry (SOCE) activity. Interacts with ASPH and TRDN. Post-translationally, N-glycosylated.

It is found in the endoplasmic reticulum. The protein resides in the sarcoplasmic reticulum. Its subcellular location is the sarcoplasmic reticulum lumen. It localises to the sarcoplasmic reticulum membrane. The protein localises to the mitochondrion matrix. Its function is as follows. Calsequestrin is a high-capacity, moderate affinity, calcium-binding protein and thus acts as an internal calcium store in muscle. Calcium ions are bound by clusters of acidic residues at the protein surface, often at the interface between subunits. Can bind around 80 Ca(2+) ions. Regulates the release of lumenal Ca(2+) via the calcium release channel RYR1; this plays an important role in triggering muscle contraction. Negatively regulates store-operated Ca(2+) entry (SOCE) activity. In Canis lupus familiaris (Dog), this protein is Calsequestrin-1 (CASQ1).